We begin with the raw amino-acid sequence, 263 residues long: Hydroxyacylglutathione hydrolase (263 aa).

Zn(2+) is bound by residues H60, H62, D64, H65, H120, D137, and H175.

It belongs to the metallo-beta-lactamase superfamily. Glyoxalase II family. As to quaternary structure, monomer. Requires Zn(2+) as cofactor.

It catalyses the reaction an S-(2-hydroxyacyl)glutathione + H2O = a 2-hydroxy carboxylate + glutathione + H(+). The protein operates within secondary metabolite metabolism; methylglyoxal degradation; (R)-lactate from methylglyoxal: step 2/2. Thiolesterase that catalyzes the hydrolysis of S-D-lactoyl-glutathione to form glutathione and D-lactic acid. The chain is Hydroxyacylglutathione hydrolase from Shewanella pealeana (strain ATCC 700345 / ANG-SQ1).